The following is a 544-amino-acid chain: MSIFKRLLCLTLLWIAALESEADPLIVEITNGKIRGKDNGLYYSYESIPNAEHPTGALRFEAPQPYSHHWTDVFNATQSPVECMQWNQFINENNKLMGDEDCLTVSIYKPKKPNRSSFPVVVLLHGGAFMFGSGSIYGHDSIMREGTLLVVKISFGLGPLGFASTGDRHLPGNYGLKDQRLALQWIKKNIAHFGGMPDNIVLIGHSAGGASAHLQLLHEDFKHLAKGAISVSGNALDPWVIQQGGRRRAFELGRIVGCGHTNVSAELKDCLKSKPASDIVSAVRSFLVFSYVPFSAFGPVVEPSDAPDAFLTEDPRAVIKSGKFAQVPWAVTYTTEDGGYNAAQLLERNKLTGESWIDLLNDRWFDWAPYLLFYRDAKKTIKDMDDLSFDLRQQYLADRRFSVESYWNVQRMFTDVLFKNSVPSAIDLHRKYGKSPVYSFVYDNPTDSGVGQLLSNRTDVHFGTVHGDDFFLIFNTAAYRTGIRPDEEVISKKFIGMLEDFALNDKGTLTFGECNFQNNVNSKEYQVLRISRNACKNEEYARFP.

An N-terminal signal peptide occupies residues M1–E19. A glycan (N-linked (GlcNAc...) asparagine) is linked at N75. An intrachain disulfide couples C83 to C102. N114 carries an N-linked (GlcNAc...) asparagine glycan. The Acyl-ester intermediate role is filled by S206. C258 and C270 form a disulfide bridge. N262 and N456 each carry an N-linked (GlcNAc...) asparagine glycan. Catalysis depends on H466, which acts as the Charge relay system. Residues C514 and C535 are joined by a disulfide bond.

Belongs to the type-B carboxylesterase/lipase family. In terms of assembly, monomer.

The protein localises to the secreted. The catalysed reaction is a carboxylic ester + H2O = an alcohol + a carboxylate + H(+). In Drosophila melanogaster (Fruit fly), this protein is Esterase P (Est-P).